A 229-amino-acid polypeptide reads, in one-letter code: Cytochrome c oxidase subunit 2 (229 aa).

The Mitochondrial intermembrane segment spans residues 1-14; it reads MANPSQFGFQDASS. A helical transmembrane segment spans residues 15 to 45; that stretch reads PIMEELVEFHDHALMVALAICSLVLYLLALM. Residues 46-58 are Mitochondrial matrix-facing; the sequence is LVEKLSSNTVDAQ. Residues 59–86 form a helical membrane-spanning segment; it reads EVELIWTILPAIVLILLALPSLQILYMM. Over 87–229 the chain is Mitochondrial intermembrane; that stretch reads DEIDEPDLTL…SWSSLLSTDS (143 aa). Residues His160, Cys195, Glu197, Cys199, His203, and Met206 each coordinate Cu cation. Glu197 provides a ligand contact to Mg(2+).

It belongs to the cytochrome c oxidase subunit 2 family. Component of the cytochrome c oxidase (complex IV, CIV), a multisubunit enzyme composed of 14 subunits. The complex is composed of a catalytic core of 3 subunits MT-CO1, MT-CO2 and MT-CO3, encoded in the mitochondrial DNA, and 11 supernumerary subunits COX4I, COX5A, COX5B, COX6A, COX6B, COX6C, COX7A, COX7B, COX7C, COX8 and NDUFA4, which are encoded in the nuclear genome. The complex exists as a monomer or a dimer and forms supercomplexes (SCs) in the inner mitochondrial membrane with NADH-ubiquinone oxidoreductase (complex I, CI) and ubiquinol-cytochrome c oxidoreductase (cytochrome b-c1 complex, complex III, CIII), resulting in different assemblies (supercomplex SCI(1)III(2)IV(1) and megacomplex MCI(2)III(2)IV(2)). Found in a complex with TMEM177, COA6, COX18, COX20, SCO1 and SCO2. Interacts with TMEM177 in a COX20-dependent manner. Interacts with COX20. Interacts with COX16. Requires Cu cation as cofactor.

It localises to the mitochondrion inner membrane. It catalyses the reaction 4 Fe(II)-[cytochrome c] + O2 + 8 H(+)(in) = 4 Fe(III)-[cytochrome c] + 2 H2O + 4 H(+)(out). In terms of biological role, component of the cytochrome c oxidase, the last enzyme in the mitochondrial electron transport chain which drives oxidative phosphorylation. The respiratory chain contains 3 multisubunit complexes succinate dehydrogenase (complex II, CII), ubiquinol-cytochrome c oxidoreductase (cytochrome b-c1 complex, complex III, CIII) and cytochrome c oxidase (complex IV, CIV), that cooperate to transfer electrons derived from NADH and succinate to molecular oxygen, creating an electrochemical gradient over the inner membrane that drives transmembrane transport and the ATP synthase. Cytochrome c oxidase is the component of the respiratory chain that catalyzes the reduction of oxygen to water. Electrons originating from reduced cytochrome c in the intermembrane space (IMS) are transferred via the dinuclear copper A center (CU(A)) of subunit 2 and heme A of subunit 1 to the active site in subunit 1, a binuclear center (BNC) formed by heme A3 and copper B (CU(B)). The BNC reduces molecular oxygen to 2 water molecules using 4 electrons from cytochrome c in the IMS and 4 protons from the mitochondrial matrix. This is Cytochrome c oxidase subunit 2 (MT-CO2) from Struthio camelus (Common ostrich).